A 58-amino-acid chain; its full sequence is Keratin-associated protein 19-9b (58 aa).

The segment at 6–52 (GNYYGGLGYGLGGFGGFGGLGYGYGSSYGLGGYGGYGYFSPSFYGGY) is 12 X 2 AA repeats of G-[YCGS].

This sequence belongs to the KRTAP type 19 family. As to quaternary structure, interacts with hair keratins.

Its function is as follows. In the hair cortex, hair keratin intermediate filaments are embedded in an interfilamentous matrix, consisting of hair keratin-associated proteins (KRTAP), which are essential for the formation of a rigid and resistant hair shaft through their extensive disulfide bond cross-linking with abundant cysteine residues of hair keratins. The matrix proteins include the high-sulfur and high-glycine-tyrosine keratins. The chain is Keratin-associated protein 19-9b (Krtap19-9b) from Mus musculus (Mouse).